The sequence spans 491 residues: Cobyric acid synthase (491 aa).

In terms of domain architecture, GATase cobBQ-type spans 246-435 (KIDVAVIKLP…IHGIFDGANF (190 aa)). Cys-327 serves as the catalytic Nucleophile. His-427 is an active-site residue.

Belongs to the CobB/CobQ family. CobQ subfamily.

The protein operates within cofactor biosynthesis; adenosylcobalamin biosynthesis. Its function is as follows. Catalyzes amidations at positions B, D, E, and G on adenosylcobyrinic A,C-diamide. NH(2) groups are provided by glutamine, and one molecule of ATP is hydrogenolyzed for each amidation. The sequence is that of Cobyric acid synthase from Clostridium acetobutylicum (strain ATCC 824 / DSM 792 / JCM 1419 / IAM 19013 / LMG 5710 / NBRC 13948 / NRRL B-527 / VKM B-1787 / 2291 / W).